The sequence spans 568 residues: Urease subunit alpha (568 aa).

The Urease domain occupies 133 to 568; sequence GGLDIHIHFN…ELPLAQRYLL (436 aa). Residues His138, His140, and Lys217 each contribute to the Ni(2+) site. The residue at position 217 (Lys217) is an N6-carboxylysine. His219 lines the substrate pocket. 2 residues coordinate Ni(2+): His246 and His272. The active-site Proton donor is the His320. Residue Asp360 participates in Ni(2+) binding.

Belongs to the metallo-dependent hydrolases superfamily. Urease alpha subunit family. Heterotrimer of UreA (gamma), UreB (beta) and UreC (alpha) subunits. Three heterotrimers associate to form the active enzyme. Ni cation is required as a cofactor. In terms of processing, carboxylation allows a single lysine to coordinate two nickel ions.

It is found in the cytoplasm. It catalyses the reaction urea + 2 H2O + H(+) = hydrogencarbonate + 2 NH4(+). Its pathway is nitrogen metabolism; urea degradation; CO(2) and NH(3) from urea (urease route): step 1/1. This Haloarcula marismortui (strain ATCC 43049 / DSM 3752 / JCM 8966 / VKM B-1809) (Halobacterium marismortui) protein is Urease subunit alpha.